We begin with the raw amino-acid sequence, 424 residues long: Glutamate-1-semialdehyde 2,1-aminomutase (424 aa).

Lys-263 carries the N6-(pyridoxal phosphate)lysine modification.

Belongs to the class-III pyridoxal-phosphate-dependent aminotransferase family. HemL subfamily. In terms of assembly, homodimer. The cofactor is pyridoxal 5'-phosphate.

It localises to the cytoplasm. It catalyses the reaction (S)-4-amino-5-oxopentanoate = 5-aminolevulinate. Its pathway is porphyrin-containing compound metabolism; protoporphyrin-IX biosynthesis; 5-aminolevulinate from L-glutamyl-tRNA(Glu): step 2/2. The sequence is that of Glutamate-1-semialdehyde 2,1-aminomutase from Campylobacter jejuni subsp. doylei (strain ATCC BAA-1458 / RM4099 / 269.97).